Reading from the N-terminus, the 403-residue chain is D-mannonate dehydratase (403 aa).

Substrate is bound by residues Asn-38 and His-123. The Proton donor/acceptor role is filled by Tyr-160. Residue Asp-211 participates in Mg(2+) binding. His-213 acts as the Proton donor/acceptor in catalysis. The Mg(2+) site is built by Glu-237 and Glu-263. Residues Glu-263, Arg-284, His-313, Asp-317, and Glu-340 each coordinate substrate.

Belongs to the mandelate racemase/muconate lactonizing enzyme family. GalD subfamily. The cofactor is Mg(2+).

The catalysed reaction is D-mannonate = 2-dehydro-3-deoxy-D-gluconate + H2O. Its pathway is carbohydrate metabolism; pentose and glucuronate interconversion. Functionally, catalyzes the dehydration of D-mannonate. Has no detectable activity with a panel of 70 other acid sugars (in vitro). The chain is D-mannonate dehydratase from Sphingomonas sp. (strain SKA58).